The primary structure comprises 293 residues: MAVSLNDIKNKIASTKNTSQITNAMQMVSAAKLGKSEEAAKNFQIYASKVRKLLTDLLHGHEAENAKYHPMLTSRPVKKTGYIVITSDRGLVGGYNATILKAMMELKAEYHPMGDDFEILCIGGVGADFCRARGVQPVYELRGLADQPSFDEVRKIINKAIEMYQNELFDELYVCYNHHVNSLTSQMRIEQMLPIIDLDPNEADEDYTVNLELESSREAILDQLLPQFAESMIYGAIIDAKTAENAAGMTAMQTATDNAKKVISDLTIQYNRARQAAITQEITEIVAGASALE.

This sequence belongs to the ATPase gamma chain family. As to quaternary structure, F-type ATPases have 2 components, CF(1) - the catalytic core - and CF(0) - the membrane proton channel. CF(1) has five subunits: alpha(3), beta(3), gamma(1), delta(1), epsilon(1). CF(0) has three main subunits: a, b and c.

Its subcellular location is the cell membrane. Its function is as follows. Produces ATP from ADP in the presence of a proton gradient across the membrane. The gamma chain is believed to be important in regulating ATPase activity and the flow of protons through the CF(0) complex. The sequence is that of ATP synthase gamma chain from Streptococcus gordonii (strain Challis / ATCC 35105 / BCRC 15272 / CH1 / DL1 / V288).